A 248-amino-acid chain; its full sequence is Triosephosphate isomerase (248 aa).

9 to 11 (NWK) is a binding site for substrate. H93 acts as the Electrophile in catalysis. E163 functions as the Proton acceptor in the catalytic mechanism. Substrate contacts are provided by residues G169, S208, and 229 to 230 (GG).

This sequence belongs to the triosephosphate isomerase family. In terms of assembly, homodimer.

Its subcellular location is the cytoplasm. The enzyme catalyses D-glyceraldehyde 3-phosphate = dihydroxyacetone phosphate. It participates in carbohydrate biosynthesis; gluconeogenesis. Its pathway is carbohydrate degradation; glycolysis; D-glyceraldehyde 3-phosphate from glycerone phosphate: step 1/1. Involved in the gluconeogenesis. Catalyzes stereospecifically the conversion of dihydroxyacetone phosphate (DHAP) to D-glyceraldehyde-3-phosphate (G3P). This Jannaschia sp. (strain CCS1) protein is Triosephosphate isomerase.